The primary structure comprises 130 residues: Anti-adapter protein IraD (130 aa).

This sequence belongs to the GpW/Gp25 family. IraD subfamily. In terms of assembly, interacts with RssB.

The protein localises to the cytoplasm. Inhibits RpoS proteolysis by regulating RssB activity, thereby increasing the stability of the sigma stress factor RpoS during oxidative stress. Its effect on RpoS stability is due to its interaction with RssB, which probably blocks the interaction of RssB with RpoS, and the consequent delivery of the RssB-RpoS complex to the ClpXP protein degradation pathway. The chain is Anti-adapter protein IraD from Escherichia coli O139:H28 (strain E24377A / ETEC).